Consider the following 193-residue polypeptide: Tetrahydromethanopterin S-methyltransferase subunit A 2 (193 aa).

The Cytoplasmic segment spans residues 1–38 (MADKKPTAENWPVVSGDYIVGDPESPVAVTTLASHNED). Residues 39-58 (IPAAAGAAIAGPCKTENLGI) form a helical membrane-spanning segment. Topologically, residues 59–193 (EKVVANIISN…SESEKIESEA (135 aa)) are extracellular. H84 provides a ligand contact to 5-hydroxybenzimidazolylcob(I)amide. A disordered region spans residues 174 to 193 (SKKSSFVESSSESEKIESEA).

This sequence belongs to the MtrA family. As to quaternary structure, the complex is composed of 8 subunits; MtrA, MtrB, MtrC, MtrD, MtrE, MtrF, MtrG and MtrH. Requires 5-hydroxybenzimidazolylcob(I)amide as cofactor.

The protein localises to the cell membrane. It catalyses the reaction 5-methyl-5,6,7,8-tetrahydromethanopterin + coenzyme M + 2 Na(+)(in) = 5,6,7,8-tetrahydromethanopterin + methyl-coenzyme M + 2 Na(+)(out). It participates in one-carbon metabolism; methanogenesis from CO(2); methyl-coenzyme M from 5,10-methylene-5,6,7,8-tetrahydromethanopterin: step 2/2. Functionally, part of a complex that catalyzes the formation of methyl-coenzyme M and tetrahydromethanopterin from coenzyme M and methyl-tetrahydromethanopterin. This is an energy-conserving, sodium-ion translocating step. The protein is Tetrahydromethanopterin S-methyltransferase subunit A 2 of Methanobrevibacter ruminantium (strain ATCC 35063 / DSM 1093 / JCM 13430 / OCM 146 / M1) (Methanobacterium ruminantium).